Reading from the N-terminus, the 2014-residue chain is Fatty acid synthase beta subunit pigK (2014 aa).

Positions 144–515 (LAAVFGGQST…KDGQGVRVII (372 aa)) are acetyltransferase (AT) domain. S263 functions as the For acetyltransferase activity in the catalytic mechanism. Residues 570-815 (SRLLDTPPLM…LITEASGVSD (246 aa)) are enoyl reductase (ER) domain. Positions 1126 to 1606 (RSGSPWIHAL…LPGDRLLVNV (481 aa)) are dehydratase (DH) domain. In terms of domain architecture, MaoC-like spans 1514 to 1627 (PGWPGVSSLE…FNVSAFKQAT (114 aa)). The tract at residues 1645–2005 (FFFTGQGSQK…VREVFNITQS (361 aa)) is malonyl/palmitoyl transferase (MT/PT) domain. The active-site For malonyltransferase activity is S1790.

This sequence belongs to the fungal fatty acid synthetase subunit beta family. As to quaternary structure, [Alpha(6)beta(6)] hexamers of two multifunctional subunits (alpha and beta).

The enzyme catalyses acetyl-CoA + n malonyl-CoA + 2n NADPH + 4n H(+) = a long-chain-acyl-CoA + n CoA + n CO2 + 2n NADP(+).. The catalysed reaction is holo-[ACP] + acetyl-CoA = acetyl-[ACP] + CoA. It carries out the reaction holo-[ACP] + malonyl-CoA = malonyl-[ACP] + CoA. It catalyses the reaction a (3R)-hydroxyacyl-[ACP] = a (2E)-enoyl-[ACP] + H2O. The enzyme catalyses a 2,3-saturated acyl-[ACP] + NAD(+) = a (2E)-enoyl-[ACP] + NADH + H(+). The catalysed reaction is (9Z)-octadecenoyl-[ACP] + H2O = (9Z)-octadecenoate + holo-[ACP] + H(+). Its pathway is secondary metabolite biosynthesis. Its function is as follows. Fatty acid synthase subunit beta; part of the gene cluster that mediates the biosynthesis of azaphilone pigments (MonAzPs), a complex mixture of compounds with a common azaphilone skeleton very widely used as food colorants. PigJ and pigK form the two subunits of a dedicated fungal fatty acid synthase (FAS) that produces the side chain fatty acyl moiety of MonAzPs, a beta-keto fatty acid. The chain length control of the pigJ-pigK FAS is somewhat flexible as MonAzPs features either a beta-ketooctanoic or a beta-ketodecanoic acid moiety. The beta-ketoacyl-ACP probably serves as the substrate for the acetyltransferase pigD that directly transfers the fatty acyl chain to the C-4 alcohol of the pyran ring. The first step of the pathway is performed by the nrPKS pigA that forms the hexaketide precursor from successive condensations of five malonyl-CoA units, with a simple acetyl-CoA starter unit. The role of esterase pigG is not clear, but it may play at most a supplementary role in the formation of the benzaldehyde produced by the pigA nrPKS. This very reactive benzaldehyde is intercepted by the pigC ketoreductase that to provide the first stable enzyme-free MonAzPs intermediate, 6-(4-hydroxy-2-oxopentyl)-3-methyl-2,4-dioxocyclohexane carbaldehyde, also known as M7PKS-1. The FAD-dependent monooxygenase pigN hydroxylates M7PKS-1 at C-4, which triggers the formation of the pyran ring. PigJ, pigK and pigD are involved in the acetylation of the pyran ring. PigJ and pigK form the two subunits of a dedicated fungal FAS that produces the side chain fatty acyl moiety of MonAzPs and pigD transfers the fatty acyl chain to the C-4 alcohol. PigM and pigO are involved in the elimination of the omega-1 alcohol. PigM acts as an O-acetyltransferase that synthesizes the putative O-11 acetyl intermediate whereas pigO eliminates acetic acid to yield an intermediate with a C10(11) double bond. The dehydration of the C-11 alcohol followed by the reduction of the C6(7) double bond by the NAD(P)H-dependent oxidoreductase pigE increases the electrophilicity of the C-5 ketone of the resulting acyl benzopyran. This in turn sets up the C-5 ketone for an intramolecular Knoevenagel aldol condensation with the C-20 enol of the side chain. This condensation affords the characteristic linear tricyclic carbon skeletons of the yellow pigments that serve as the common precursors for the classical yellow pigments monascin and ankaflavin, orange pigments rubopunctatin and monascorubrin, and red pigments ribropunctamine and monascorubramine. The FAD-dependent oxidoreductase pigF is especially invoved in the biosynthesis of orange and red pigments via desaturation of C6(7). This chain is Fatty acid synthase beta subunit pigK, found in Monascus ruber (Mold).